A 106-amino-acid chain; its full sequence is Large ribosomal subunit protein eL42 (106 aa).

This sequence belongs to the eukaryotic ribosomal protein eL42 family.

The protein is Large ribosomal subunit protein eL42 (RPL44) of Candida tropicalis (Yeast).